Here is a 219-residue protein sequence, read N- to C-terminus: Probable GTP-binding protein EngB (219 aa).

One can recognise an EngB-type G domain in the interval valine 31–proline 205. GTP-binding positions include glycine 39–serine 46, glycine 66–leucine 70, aspartate 84–glycine 87, threonine 151–aspartate 154, and phenylalanine 184–alanine 186. Mg(2+)-binding residues include serine 46 and threonine 68.

It belongs to the TRAFAC class TrmE-Era-EngA-EngB-Septin-like GTPase superfamily. EngB GTPase family. Requires Mg(2+) as cofactor.

Functionally, necessary for normal cell division and for the maintenance of normal septation. This is Probable GTP-binding protein EngB from Shewanella sp. (strain ANA-3).